Consider the following 450-residue polypeptide: tRNA modification GTPase MnmE (450 aa).

Arg23, Glu79, and Lys118 together coordinate (6S)-5-formyl-5,6,7,8-tetrahydrofolate. Residues 214–374 (GITLILVGKP…LKEHILNKVG (161 aa)) form the TrmE-type G domain. Position 224 (Asn224) interacts with K(+). GTP-binding positions include 224 to 229 (NAGKSS), 243 to 249 (TSIAGTT), and 268 to 271 (DTAG). A Mg(2+)-binding site is contributed by Ser228. K(+) is bound by residues Thr243, Ile245, and Thr248. Thr249 lines the Mg(2+) pocket. Lys450 contributes to the (6S)-5-formyl-5,6,7,8-tetrahydrofolate binding site.

It belongs to the TRAFAC class TrmE-Era-EngA-EngB-Septin-like GTPase superfamily. TrmE GTPase family. Homodimer. Heterotetramer of two MnmE and two MnmG subunits. K(+) is required as a cofactor.

Its subcellular location is the cytoplasm. In terms of biological role, exhibits a very high intrinsic GTPase hydrolysis rate. Involved in the addition of a carboxymethylaminomethyl (cmnm) group at the wobble position (U34) of certain tRNAs, forming tRNA-cmnm(5)s(2)U34. The protein is tRNA modification GTPase MnmE of Francisella tularensis subsp. tularensis (strain WY96-3418).